Reading from the N-terminus, the 334-residue chain is GTP 3',8-cyclase (334 aa).

The Radical SAM core domain occupies 11–236 (GFNRKIDYLR…ESTESSQGPA (226 aa)). A GTP-binding site is contributed by R20. Residues C27 and C31 each contribute to the [4Fe-4S] cluster site. Y33 contacts S-adenosyl-L-methionine. Residue C34 participates in [4Fe-4S] cluster binding. GTP is bound at residue R69. Residue G73 coordinates S-adenosyl-L-methionine. T100 is a binding site for GTP. S124 is an S-adenosyl-L-methionine binding site. Residue K161 coordinates GTP. M195 is a binding site for S-adenosyl-L-methionine. Positions 260 and 263 each coordinate [4Fe-4S] cluster. 265–267 (RVR) serves as a coordination point for GTP. C277 lines the [4Fe-4S] cluster pocket.

Belongs to the radical SAM superfamily. MoaA family. Monomer and homodimer. Requires [4Fe-4S] cluster as cofactor.

The enzyme catalyses GTP + AH2 + S-adenosyl-L-methionine = (8S)-3',8-cyclo-7,8-dihydroguanosine 5'-triphosphate + 5'-deoxyadenosine + L-methionine + A + H(+). Its pathway is cofactor biosynthesis; molybdopterin biosynthesis. Catalyzes the cyclization of GTP to (8S)-3',8-cyclo-7,8-dihydroguanosine 5'-triphosphate. The polypeptide is GTP 3',8-cyclase (Pseudomonas putida (strain W619)).